A 125-amino-acid chain; its full sequence is MDMDEMLRWACRKNYNYLTIYYCCVALGADINQAMFHSIQFYNIGNIFFCIDLGANAFEEGKTLAHQKDNSFIASMLSLNCYSMNDSLSLKETDPEVIKRMLKDYHSKNLSIAHKHYINDGFNDI.

The protein belongs to the asfivirus MGF 360 family. In terms of assembly, interacts with host STAT1; this interaction mediates STAT1 degradation through apoptosis. Interacts with host STAT2; this interaction mediates STAT2 degradation through the proteasome.

It is found in the host cytoplasm. Functionally, plays a role in virus cell tropism, and may be required for efficient virus replication in macrophages. In addition, inhibits IFN-beta-induced IFN-stimulated genes (ISGs) transcription. Mechanistically, degrades host STAT1 and STAT2 through apoptosis and ubiquitin-proteasome pathways respectively. The chain is Protein MGF 360-9L from African swine fever virus (strain Badajoz 1971 Vero-adapted) (Ba71V).